A 937-amino-acid chain; its full sequence is MSQPIPSASPALAALIERAVARVRHALPADAPWPEGLEHPLARVALASDFVVDTLARQPALLAHLAQPDPPPLPVPRLDPAQPQEWAAQLRRYRAAASARLVWRDVLGLDDVDATLAGATMLAETCLQCALQALEQQFATRHGQVIAEDGSVQRLVVFGLGKLGGGELNFSSDVDLVYAYPQAGQSDGARPLAAEEYFARLGQQLAKLLDETTADGFSHRVDLRLRPFGSAGRVALSFNGMDQYFQREGRDWERYAWLKARPVAGDIAAGEAWLETLRPFVYRRYLDFTALDGLRDMKAAITAEVARHARLDDIKRGPGGIREIEFLVQSLQLIRGGREASLRERRLLPALQALVDLGQIDPPTGQALAEAYRFLRRVENRLQMLRDAQTHALPQGEPERERIALGLGYAHWQALLEALAPHRTRVAAEFAELLAPRVHATAPDTLADYWRALPEGDAAPLLGIGLHDPNNAHHMLADFAQSSGVRALSDGARTRLDRVMPALLHAAIRATQPDAALRRVLGLLQATLRRTSYLALLDEQPSALARLVDVLSRSALLAERLAAYPLLLDELLDTRISGPLPDRAALHTACVDTLQIDDTEAALRELNERRLALSFRIALATLDGRQQPVDSTQQLAWLAEAVVQTVLQLAQTQLQAAHGQVPGGAFAIIGYGSLGGMELGFGSDLDLVFLYDHPREVEASDGKRPLEAGRWFARLAQKVMTLLGAETGAGRLYDIDVRLRPDGGKGALVSSLASYRDYQRDRAWTWEHQALVRARAVAGDAALCEAFVQVRRETLTRVRDPALLHEDVRKMRARMRSELDRSDAGRLDLKQGAGGLVDLEFLLQAGVLGQAAQHPALLLACATPALIDALVQVQWLPAESAAPLHHAHATLVEAGLSCTLDRRPRLVVSTPPIRDACQIVAAIADAQQLRFQPGKGA.

The adenylyl removase stretch occupies residues 1–436 (MSQPIPSASP…AAEFAELLAP (436 aa)). The segment at 443–937 (PDTLADYWRA…QLRFQPGKGA (495 aa)) is adenylyl transferase.

This sequence belongs to the GlnE family. Mg(2+) is required as a cofactor.

It carries out the reaction [glutamine synthetase]-O(4)-(5'-adenylyl)-L-tyrosine + phosphate = [glutamine synthetase]-L-tyrosine + ADP. It catalyses the reaction [glutamine synthetase]-L-tyrosine + ATP = [glutamine synthetase]-O(4)-(5'-adenylyl)-L-tyrosine + diphosphate. Involved in the regulation of glutamine synthetase GlnA, a key enzyme in the process to assimilate ammonia. When cellular nitrogen levels are high, the C-terminal adenylyl transferase (AT) inactivates GlnA by covalent transfer of an adenylyl group from ATP to specific tyrosine residue of GlnA, thus reducing its activity. Conversely, when nitrogen levels are low, the N-terminal adenylyl removase (AR) activates GlnA by removing the adenylyl group by phosphorolysis, increasing its activity. The regulatory region of GlnE binds the signal transduction protein PII (GlnB) which indicates the nitrogen status of the cell. In Xanthomonas campestris pv. campestris (strain B100), this protein is Bifunctional glutamine synthetase adenylyltransferase/adenylyl-removing enzyme.